Here is a 305-residue protein sequence, read N- to C-terminus: Oxygen-dependent coproporphyrinogen-III oxidase (305 aa).

Ser99 is a substrate binding site. The a divalent metal cation site is built by His103 and His113. The active-site Proton donor is the His113. 115 to 117 (NVR) provides a ligand contact to substrate. A divalent metal cation-binding residues include His152 and His182. Positions 247–282 (YVEFNLVLDRGTLFGLQTGGRTESILMSMPPLARWE) are important for dimerization. Substrate is bound at residue 265-267 (GGR).

The protein belongs to the aerobic coproporphyrinogen-III oxidase family. As to quaternary structure, homodimer. It depends on a divalent metal cation as a cofactor.

The protein resides in the cytoplasm. The catalysed reaction is coproporphyrinogen III + O2 + 2 H(+) = protoporphyrinogen IX + 2 CO2 + 2 H2O. It participates in porphyrin-containing compound metabolism; protoporphyrin-IX biosynthesis; protoporphyrinogen-IX from coproporphyrinogen-III (O2 route): step 1/1. Functionally, involved in the heme biosynthesis. Catalyzes the aerobic oxidative decarboxylation of propionate groups of rings A and B of coproporphyrinogen-III to yield the vinyl groups in protoporphyrinogen-IX. In Vibrio cholerae serotype O1 (strain M66-2), this protein is Oxygen-dependent coproporphyrinogen-III oxidase.